A 742-amino-acid polypeptide reads, in one-letter code: Phosphoribosylformylglycinamidine synthase subunit PurL (742 aa).

Residue His-54 is part of the active site. Residues Tyr-57 and Lys-96 each coordinate ATP. Residue Glu-98 participates in Mg(2+) binding. Residues 99 to 102 (SHNH) and Arg-121 each bind substrate. Residue His-100 is the Proton acceptor of the active site. Asp-122 is a binding site for Mg(2+). Gln-245 is a substrate binding site. Asp-273 provides a ligand contact to Mg(2+). 317-319 (ESQ) is a binding site for substrate. Residues Asp-500 and Gly-537 each contribute to the ATP site. Residue Asn-538 participates in Mg(2+) binding. Ser-540 is a binding site for substrate.

This sequence belongs to the FGAMS family. Monomer. Part of the FGAM synthase complex composed of 1 PurL, 1 PurQ and 2 PurS subunits.

It localises to the cytoplasm. It catalyses the reaction N(2)-formyl-N(1)-(5-phospho-beta-D-ribosyl)glycinamide + L-glutamine + ATP + H2O = 2-formamido-N(1)-(5-O-phospho-beta-D-ribosyl)acetamidine + L-glutamate + ADP + phosphate + H(+). Its pathway is purine metabolism; IMP biosynthesis via de novo pathway; 5-amino-1-(5-phospho-D-ribosyl)imidazole from N(2)-formyl-N(1)-(5-phospho-D-ribosyl)glycinamide: step 1/2. Its function is as follows. Part of the phosphoribosylformylglycinamidine synthase complex involved in the purines biosynthetic pathway. Catalyzes the ATP-dependent conversion of formylglycinamide ribonucleotide (FGAR) and glutamine to yield formylglycinamidine ribonucleotide (FGAM) and glutamate. The FGAM synthase complex is composed of three subunits. PurQ produces an ammonia molecule by converting glutamine to glutamate. PurL transfers the ammonia molecule to FGAR to form FGAM in an ATP-dependent manner. PurS interacts with PurQ and PurL and is thought to assist in the transfer of the ammonia molecule from PurQ to PurL. The polypeptide is Phosphoribosylformylglycinamidine synthase subunit PurL (Geobacillus thermodenitrificans (strain NG80-2)).